Reading from the N-terminus, the 326-residue chain is 5-dehydro-2-deoxygluconokinase (326 aa).

The protein belongs to the carbohydrate kinase PfkB family.

The catalysed reaction is 5-dehydro-2-deoxy-D-gluconate + ATP = 6-phospho-5-dehydro-2-deoxy-D-gluconate + ADP + H(+). It participates in polyol metabolism; myo-inositol degradation into acetyl-CoA; acetyl-CoA from myo-inositol: step 5/7. Catalyzes the phosphorylation of 5-dehydro-2-deoxy-D-gluconate (2-deoxy-5-keto-D-gluconate or DKG) to 6-phospho-5-dehydro-2-deoxy-D-gluconate (DKGP). The chain is 5-dehydro-2-deoxygluconokinase from Shouchella clausii (strain KSM-K16) (Alkalihalobacillus clausii).